The following is a 157-amino-acid chain: 2-C-methyl-D-erythritol 2,4-cyclodiphosphate synthase (157 aa).

Residues Asp9 and His11 each coordinate a divalent metal cation. Residues 9–11 (DVH) and 35–36 (HS) contribute to the 4-CDP-2-C-methyl-D-erythritol 2-phosphate site. His43 is an a divalent metal cation binding site. 4-CDP-2-C-methyl-D-erythritol 2-phosphate-binding positions include 57 to 59 (DIG), 62 to 66 (FPDTD), 101 to 107 (AEKPKMA), 133 to 136 (TTTE), Phe140, and Arg143.

The protein belongs to the IspF family. Homotrimer. Requires a divalent metal cation as cofactor.

The catalysed reaction is 4-CDP-2-C-methyl-D-erythritol 2-phosphate = 2-C-methyl-D-erythritol 2,4-cyclic diphosphate + CMP. It functions in the pathway isoprenoid biosynthesis; isopentenyl diphosphate biosynthesis via DXP pathway; isopentenyl diphosphate from 1-deoxy-D-xylulose 5-phosphate: step 4/6. Functionally, involved in the biosynthesis of isopentenyl diphosphate (IPP) and dimethylallyl diphosphate (DMAPP), two major building blocks of isoprenoid compounds. Catalyzes the conversion of 4-diphosphocytidyl-2-C-methyl-D-erythritol 2-phosphate (CDP-ME2P) to 2-C-methyl-D-erythritol 2,4-cyclodiphosphate (ME-CPP) with a corresponding release of cytidine 5-monophosphate (CMP). This chain is 2-C-methyl-D-erythritol 2,4-cyclodiphosphate synthase, found in Listeria monocytogenes serovar 1/2a (strain ATCC BAA-679 / EGD-e).